The sequence spans 479 residues: Nucleoside-diphosphatase uda-1 (479 aa).

The Cytoplasmic segment spans residues 1 to 7 (MLFPAFS). The helical; Signal-anchor for type II membrane protein transmembrane segment at 8–24 (ILLISFFSLLSVVTTKT) threads the bilayer. Over 25 to 479 (QYWCHGDGVL…VLSYFNIISV (455 aa)) the chain is Lumenal. Residue E171 is the Proton acceptor of the active site. Residues N300 and N452 are each glycosylated (N-linked (GlcNAc...) asparagine).

The protein belongs to the GDA1/CD39 NTPase family. The cofactor is Ca(2+). Requires Mg(2+) as cofactor. Mn(2+) serves as cofactor.

Its subcellular location is the endomembrane system. The enzyme catalyses a ribonucleoside 5'-diphosphate + H2O = a ribonucleoside 5'-phosphate + phosphate + H(+). Hydrolyzes UDP and GDP but not any other nucleoside di-, mono- or triphosphates. May promote reglycosylation reactions involved in glycoproteins folding and quality control in the endoplasmic reticulum. This is Nucleoside-diphosphatase uda-1 (uda-1) from Caenorhabditis elegans.